Reading from the N-terminus, the 454-residue chain is Tol-Pal system protein TolB (454 aa).

The signal sequence occupies residues 1 to 30 (MNDARSITRRRFMTLTGSGLAMLGGGHAFA).

This sequence belongs to the TolB family. As to quaternary structure, the Tol-Pal system is composed of five core proteins: the inner membrane proteins TolA, TolQ and TolR, the periplasmic protein TolB and the outer membrane protein Pal. They form a network linking the inner and outer membranes and the peptidoglycan layer.

The protein localises to the periplasm. Its function is as follows. Part of the Tol-Pal system, which plays a role in outer membrane invagination during cell division and is important for maintaining outer membrane integrity. This Bradyrhizobium diazoefficiens (strain JCM 10833 / BCRC 13528 / IAM 13628 / NBRC 14792 / USDA 110) protein is Tol-Pal system protein TolB.